The sequence spans 91 residues: Probable Fe(2+)-trafficking protein (91 aa).

The protein belongs to the Fe(2+)-trafficking protein family.

Functionally, could be a mediator in iron transactions between iron acquisition and iron-requiring processes, such as synthesis and/or repair of Fe-S clusters in biosynthetic enzymes. This chain is Probable Fe(2+)-trafficking protein, found in Cellvibrio japonicus (strain Ueda107) (Pseudomonas fluorescens subsp. cellulosa).